A 581-amino-acid chain; its full sequence is MQRPGPRLWLVLQVMGSCAAISSMDMERPGDGKCQPIEIPMCKDIGYNMTRMPNLMGHENQREAAIQLHEFAPLVEYGCHGHLRFFLCSLYAPMCTEQVSTPIPACRVMCEQARLKCSPIMEQFNFKWPDSLDCRKLPNKNDPNYLCMEAPNNGSDEPTRGSGLFPPLFRPQRPHSAQEHPLKDGGPGRGGCDNPGKFHHVEKSASCAPLCTPGVDVYWSREDKRFAVVWLAIWAVLCFFSSAFTVLTFLIDPARFRYPERPIIFLSMCYCVYSVGYLIRLFAGAESIACDRDSGQLYVIQEGLESTGCTLVFLVLYYFGMASSLWWVVLTLTWFLAAGKKWGHEAIEANSSYFHLAAWAIPAVKTILILVMRRVAGDELTGVCYVGSMDVNALTGFVLIPLACYLVIGTSFILSGFVALFHIRRVMKTGGENTDKLEKLMVRIGLFSVLYTVPATCVIACYFYERLNMDYWKILAAQHKCKMNNQTKTLDCLMAASIPAVEIFMVKIFMLLVVGITSGMWIWTSKTLQSWQQVCSRRLKKKSRRKPASVITSGGIYKKAQHPQKTHHGKYEIPAQSPTCV.

The signal sequence occupies residues 1-20; the sequence is MQRPGPRLWLVLQVMGSCAA. Topologically, residues 21-225 are extracellular; sequence ISSMDMERPG…DVYWSREDKR (205 aa). Residues 29–150 form the FZ domain; that stretch reads PGDGKCQPIE…NDPNYLCMEA (122 aa). 5 disulfides stabilise this stretch: cysteine 34/cysteine 95, cysteine 42/cysteine 88, cysteine 79/cysteine 117, cysteine 106/cysteine 147, and cysteine 110/cysteine 134. N-linked (GlcNAc...) asparagine glycosylation is present at asparagine 48. The N-linked (GlcNAc...) asparagine glycan is linked to asparagine 153. A helical transmembrane segment spans residues 226–246; sequence FAVVWLAIWAVLCFFSSAFTV. Topologically, residues 247–262 are cytoplasmic; the sequence is LTFLIDPARFRYPERP. A helical transmembrane segment spans residues 263 to 283; sequence IIFLSMCYCVYSVGYLIRLFA. Topologically, residues 284–311 are extracellular; sequence GAESIACDRDSGQLYVIQEGLESTGCTL. A helical membrane pass occupies residues 312–332; it reads VFLVLYYFGMASSLWWVVLTL. Over 333-351 the chain is Cytoplasmic; sequence TWFLAAGKKWGHEAIEANS. The chain crosses the membrane as a helical span at residues 352–372; that stretch reads SYFHLAAWAIPAVKTILILVM. Topologically, residues 373-393 are extracellular; it reads RRVAGDELTGVCYVGSMDVNA. A helical transmembrane segment spans residues 394–414; it reads LTGFVLIPLACYLVIGTSFIL. Topologically, residues 415-443 are cytoplasmic; that stretch reads SGFVALFHIRRVMKTGGENTDKLEKLMVR. A helical transmembrane segment spans residues 444–464; it reads IGLFSVLYTVPATCVIACYFY. Over 465-502 the chain is Extracellular; it reads ERLNMDYWKILAAQHKCKMNNQTKTLDCLMAASIPAVE. Asparagine 485 carries an N-linked (GlcNAc...) asparagine glycan. The chain crosses the membrane as a helical span at residues 503 to 523; that stretch reads IFMVKIFMLLVVGITSGMWIW. The Cytoplasmic segment spans residues 524–581; it reads TSKTLQSWQQVCSRRLKKKSRRKPASVITSGGIYKKAQHPQKTHHGKYEIPAQSPTCV. The Lys-Thr-X-X-X-Trp motif, mediates interaction with the PDZ domain of Dvl family members signature appears at 526–531; the sequence is KTLQSW. The segment at 560–581 is disordered; that stretch reads AQHPQKTHHGKYEIPAQSPTCV. The PDZ-binding signature appears at 579–581; it reads TCV.

The protein belongs to the G-protein coupled receptor Fz/Smo family. In terms of assembly, interacts with WNT7B. Interacts with MYOC. In terms of processing, ubiquitinated by ZNRF3, leading to its degradation by the proteasome. In terms of tissue distribution, highest levels in the placenta and fetal kidney, followed by fetal lung and brain. In adult brain, abundantly expressed in the cerebellum, followed by cerebral cortex, medulla and spinal cord; very low levels in total brain, frontal lobe, temporal lobe and putamen. Weak expression detected in adult brain, heart, lung, skeletal muscle, pancreas, spleen and prostate.

The protein localises to the cell membrane. Receptor for Wnt proteins. Functions in the canonical Wnt/beta-catenin signaling pathway. The canonical Wnt/beta-catenin signaling pathway leads to the activation of disheveled proteins, inhibition of GSK-3 kinase, nuclear accumulation of beta-catenin and activation of Wnt target genes. A second signaling pathway involving PKC and calcium fluxes has been seen for some family members, but it is not yet clear if it represents a distinct pathway or if it can be integrated in the canonical pathway, as PKC seems to be required for Wnt-mediated inactivation of GSK-3 kinase. Both pathways seem to involve interactions with G-proteins. May be involved in transduction and intercellular transmission of polarity information during tissue morphogenesis and/or in differentiated tissues. The polypeptide is Frizzled-10 (FZD10) (Homo sapiens (Human)).